We begin with the raw amino-acid sequence, 206 residues long: Large ribosomal subunit protein uL4 (206 aa).

It belongs to the universal ribosomal protein uL4 family. In terms of assembly, part of the 50S ribosomal subunit.

In terms of biological role, one of the primary rRNA binding proteins, this protein initially binds near the 5'-end of the 23S rRNA. It is important during the early stages of 50S assembly. It makes multiple contacts with different domains of the 23S rRNA in the assembled 50S subunit and ribosome. Forms part of the polypeptide exit tunnel. The sequence is that of Large ribosomal subunit protein uL4 from Rhodopseudomonas palustris (strain HaA2).